Here is a 547-residue protein sequence, read N- to C-terminus: Dihydrolipoyllysine-residue acetyltransferase component of pyruvate dehydrogenase complex (547 aa).

The region spanning 2-75 (SELIRVPDIG…KEGDEILELE (74 aa)) is the Lipoyl-binding 1 domain. Lys-41 is subject to N6-lipoyllysine. The tract at residues 75–117 (EVEGGEQPAEAKAEAAPAQPEAPKAEAPAPAPSESKPAAPAAA) is disordered. Positions 80–117 (EQPAEAKAEAAPAQPEAPKAEAPAPAPSESKPAAPAAA) are enriched in low complexity. The 75-residue stretch at 119 to 193 (VQDIKVPDIG…GTGDLILKLK (75 aa)) folds into the Lipoyl-binding 2 domain. Lys-159 is modified (N6-lipoyllysine). A compositionally biased stretch (low complexity) spans 202 to 231 (EEQPAAAPAQAAAPAAEQKPAAAAPAPAKA). The disordered stretch occupies residues 202-248 (EEQPAAAPAQAAAPAAEQKPAAAAPAPAKADTPAPVGAPSRDGAKVH). Residues 248-285 (HAGPAVRMLAREFGVELSEVKASGPKGRILKEDVQVFV) form the Peripheral subunit-binding (PSBD) domain. His-520 is a catalytic residue.

This sequence belongs to the 2-oxoacid dehydrogenase family. Forms a 24-polypeptide structural core with octahedral symmetry. It depends on (R)-lipoate as a cofactor.

The catalysed reaction is N(6)-[(R)-dihydrolipoyl]-L-lysyl-[protein] + acetyl-CoA = N(6)-[(R)-S(8)-acetyldihydrolipoyl]-L-lysyl-[protein] + CoA. Functionally, the pyruvate dehydrogenase complex catalyzes the overall conversion of pyruvate to acetyl-CoA and CO(2). It contains multiple copies of three enzymatic components: pyruvate dehydrogenase (E1), dihydrolipoamide acetyltransferase (E2) and lipoamide dehydrogenase (E3). The polypeptide is Dihydrolipoyllysine-residue acetyltransferase component of pyruvate dehydrogenase complex (aceF) (Pseudomonas aeruginosa (strain ATCC 15692 / DSM 22644 / CIP 104116 / JCM 14847 / LMG 12228 / 1C / PRS 101 / PAO1)).